We begin with the raw amino-acid sequence, 664 residues long: Cyclic nucleotide-gated channel alpha-2 (664 aa).

Over residues 1–20 the composition is skewed to polar residues; that stretch reads MTEKSNGVKSSPANNHNNHV. Positions 1-49 are disordered; that stretch reads MTEKSNGVKSSPANNHNNHVPATIKANGKDESRTRSRPQSAADDDTSSE. The Cytoplasmic segment spans residues 1–144; the sequence is MTEKSNGVKS…PAGDWYYRWL (144 aa). Residues 145–166 traverse the membrane as a helical segment; it reads FVIAMPVLYNWCLLVARACFSD. The Extracellular segment spans residues 167–176; that stretch reads LQRGYFLVWL. A helical membrane pass occupies residues 177-197; that stretch reads VLDYFSDVVYIADLFIRLRTG. The Cytoplasmic portion of the chain corresponds to 198 to 222; it reads FLEQGLLVKDPKKLRDNYIHTLQFK. The chain crosses the membrane as a helical span at residues 223–241; sequence LDVASIIPTDLIYFAVGIH. Over 242–246 the chain is Extracellular; it reads NPELR. A helical membrane pass occupies residues 247 to 265; the sequence is FNRLLHFARMFEFFDRTET. Over 266-272 the chain is Cytoplasmic; the sequence is RTSYPNI. The tract at residues 270-378 is ion conduction pathway; sequence PNIFRISNLV…GNVGSMISNM (109 aa). Residues 273-296 traverse the membrane as a helical segment; that stretch reads FRISNLVLYILVIIHWNACIYYAI. Over 297 to 319 the chain is Extracellular; it reads SKSIGFGVDTWVYPNITDPEYGY. 2 helical membrane-spanning segments follow: residues 320–354 and 355–379; these read LARE…LFVI and FDFL…SNMN. The tract at residues 337–340 is selectivity filter; the sequence is TIGE. Residues 380–456 form a C-linker region; it reads ATRAEFQAKI…STLKKVRIFQ (77 aa). The Cytoplasmic portion of the chain corresponds to 380–664; the sequence is ATRAEFQAKI…SPEPAAAEQP (285 aa). Positions 460–580 are cyclic nucleotide-binding domain; it reads AGLLVELVLK…EERGREILMK (121 aa). 3',5'-cyclic GMP contacts are provided by Gly520, Ser523, Arg536, and Thr537. 2 residues coordinate 3',5'-cyclic AMP: Arg536 and Thr537. Positions 597–651 form a coiled coil; that stretch reads VQEKLKQLETNMETLYTRFGRLLAEYTGAQQKLKQRITVLEVKMKQNTEDDYLSD. The segment at 644–664 is disordered; it reads TEDDYLSDGMNSPEPAAAEQP.

It belongs to the cyclic nucleotide-gated cation channel (TC 1.A.1.5) family. CNGA2 subfamily. The olfactory cyclic nucleotide-gated channel is an heterotetramer composed of CNGA2, CNGA4 and CNGB1b subunits with 2:1:1 stoichiometry.

Its subcellular location is the cell projection. The protein localises to the cilium membrane. It carries out the reaction Ca(2+)(in) = Ca(2+)(out). The catalysed reaction is Na(+)(in) = Na(+)(out). It catalyses the reaction K(+)(in) = K(+)(out). The enzyme catalyses NH4(+)(in) = NH4(+)(out). It carries out the reaction Rb(+)(in) = Rb(+)(out). The catalysed reaction is Li(+)(in) = Li(+)(out). It catalyses the reaction Cs(+)(in) = Cs(+)(out). In terms of biological role, pore-forming subunit of the olfactory cyclic nucleotide-gated channel. Operates in the cilia of olfactory sensory neurons where chemical stimulation of the odorant is converted to an electrical signal. Mediates odorant-induced cAMP-dependent Ca(2+) influx triggering neuron depolarization. The rise of intracellular Ca(2+) levels potentiates the olfactory response by activating Ca(2+)-dependent Cl(-) channels, but it also serves as a negative feedback signal to desensitize the channel for rapid adaptation to odorants. Conducts cAMP- and cGMP-gated ion currents, with permeability for monovalent and divalent cations. The polypeptide is Cyclic nucleotide-gated channel alpha-2 (Oryctolagus cuniculus (Rabbit)).